We begin with the raw amino-acid sequence, 132 residues long: Glycine cleavage system H protein (132 aa).

In terms of domain architecture, Lipoyl-binding spans 24–106; the sequence is TVRVGITDFA…YGAGWLLDVQ (83 aa). The residue at position 65 (K65) is an N6-lipoyllysine.

This sequence belongs to the GcvH family. The glycine cleavage system is composed of four proteins: P, T, L and H. (R)-lipoate is required as a cofactor.

The glycine cleavage system catalyzes the degradation of glycine. The H protein shuttles the methylamine group of glycine from the P protein to the T protein. The chain is Glycine cleavage system H protein from Mycobacterium avium (strain 104).